Consider the following 3078-residue polypeptide: Probable polyketide synthase 34 (3078 aa).

The 435-residue stretch at 28–462 (SGDVAVIGIG…GSNVCLILSE (435 aa)) folds into the Ketosynthase family 3 (KS3) domain. Active-site for beta-ketoacyl synthase activity residues include C200, H339, and H385. The segment at 665–698 (GVSADIIIGHSLGEISSSYCSGIIDFQTLCYLTY) is acyl/malonyl transferase. Catalysis depends on S675, which acts as the For acyl/malonyl transferase activity. Positions 954 to 1083 (HEKIKNEGPS…GNFSLTKHNI (130 aa)) are N-terminal hotdog fold. One can recognise a PKS/mFAS DH domain in the interval 954-1264 (HEKIKNEGPS…CTIVGSNPDS (311 aa)). H995 functions as the Proton acceptor; for dehydratase activity in the catalytic mechanism. Residues 1099-1264 (NFTSISKQDL…CTIVGSNPDS (166 aa)) form a C-terminal hotdog fold region. D1171 (proton donor; for dehydratase activity) is an active-site residue. Residues 1375–1396 (NINNNNNNNNNNNNNNNNNSNG) form a disordered region. A Carrier domain is found at 2541–2618 (DNNEIIRSTI…QSIEIIKSAH (78 aa)). S2578 bears the O-(pantetheine 4'-phosphoryl)serine mark. 2 disordered regions span residues 2617–2640 (AHNN…NNNN) and 2739–2761 (NKGS…DNNS). A compositionally biased stretch (low complexity) spans 2619 to 2640 (NNNNNNNNNNNNNNNNNNNNNN). A coiled-coil region spans residues 2621–2652 (NNNNNNNNNNNNNNNNNNNNLVKKEQQSLDEF).

Requires pantetheine 4'-phosphate as cofactor.

In terms of biological role, probable polyketide synthase. The protein is Probable polyketide synthase 34 (pks34) of Dictyostelium discoideum (Social amoeba).